We begin with the raw amino-acid sequence, 151 residues long: MKTQRQQLILKLIASTPIATQDQLARELRRRGLRVTQATVSRDIKELGLIKVPAGENLYRYAAPPGQRLINPYGRLQRLFADSVTKIDDSENLILIRTLPGTAHAVASCLDSLDWPEVIGTVAGDDTILVIVKPKEAVATVLQRFRELGEG.

Belongs to the ArgR family.

The protein localises to the cytoplasm. It functions in the pathway amino-acid biosynthesis; L-arginine biosynthesis [regulation]. Its function is as follows. Regulates arginine biosynthesis genes. This Moorella thermoacetica (strain ATCC 39073 / JCM 9320) protein is Arginine repressor.